A 141-amino-acid chain; its full sequence is Large ribosomal subunit protein uL11 (141 aa).

It belongs to the universal ribosomal protein uL11 family. In terms of assembly, part of the ribosomal stalk of the 50S ribosomal subunit. Interacts with L10 and the large rRNA to form the base of the stalk. L10 forms an elongated spine to which L12 dimers bind in a sequential fashion forming a multimeric L10(L12)X complex. Post-translationally, one or more lysine residues are methylated.

In terms of biological role, forms part of the ribosomal stalk which helps the ribosome interact with GTP-bound translation factors. This Leptospira biflexa serovar Patoc (strain Patoc 1 / Ames) protein is Large ribosomal subunit protein uL11.